Here is a 478-residue protein sequence, read N- to C-terminus: Glycogen synthase (478 aa).

Lys20 contacts ADP-alpha-D-glucose.

Belongs to the glycosyltransferase 1 family. Bacterial/plant glycogen synthase subfamily.

It catalyses the reaction [(1-&gt;4)-alpha-D-glucosyl](n) + ADP-alpha-D-glucose = [(1-&gt;4)-alpha-D-glucosyl](n+1) + ADP + H(+). Its pathway is glycan biosynthesis; glycogen biosynthesis. In terms of biological role, synthesizes alpha-1,4-glucan chains using ADP-glucose. In Cereibacter sphaeroides (strain ATCC 17023 / DSM 158 / JCM 6121 / CCUG 31486 / LMG 2827 / NBRC 12203 / NCIMB 8253 / ATH 2.4.1.) (Rhodobacter sphaeroides), this protein is Glycogen synthase.